The following is a 214-amino-acid chain: A-type ATP synthase subunit D (214 aa).

Belongs to the V-ATPase D subunit family. As to quaternary structure, has multiple subunits with at least A(3), B(3), C, D, E, F, H, I and proteolipid K(x).

It localises to the cell membrane. Component of the A-type ATP synthase that produces ATP from ADP in the presence of a proton gradient across the membrane. This is A-type ATP synthase subunit D from Thermococcus kodakarensis (strain ATCC BAA-918 / JCM 12380 / KOD1) (Pyrococcus kodakaraensis (strain KOD1)).